Here is a 263-residue protein sequence, read N- to C-terminus: MQPELLLFDIGNTSIKIGLAHERQVVTSYTLRTDAGQTADDLGLKLATLLGHAGVTPQSLRACVASSVVPGFDPLLREAVARYVDCPLYRVGADLSVPLENRYERPAEVGADRLVGAYAARRLYPEFPGLLVVDFGTAVTIDCVNGNAYMGGLIFPGPRTALSALSREAAKLPRVNLDVRADEPTPGRSTATSIQHGLVFGFACMVEGLAQRLKRQLPGPARVLGTGGFAASIARVSPVFDHVLPALLLEGLRRLYYEERTAF.

9–16 (DIGNTSIK) contributes to the ATP binding site. Residues Tyr-103 and 110–113 (GADR) each bind substrate. Catalysis depends on Asp-112, which acts as the Proton acceptor. K(+) is bound at residue Asp-134. Residue Thr-137 coordinates ATP. Position 190 (Thr-190) interacts with substrate.

This sequence belongs to the type III pantothenate kinase family. In terms of assembly, homodimer. Requires NH4(+) as cofactor. K(+) serves as cofactor.

The protein resides in the cytoplasm. It carries out the reaction (R)-pantothenate + ATP = (R)-4'-phosphopantothenate + ADP + H(+). Its pathway is cofactor biosynthesis; coenzyme A biosynthesis; CoA from (R)-pantothenate: step 1/5. Catalyzes the phosphorylation of pantothenate (Pan), the first step in CoA biosynthesis. This is Type III pantothenate kinase from Desulfovibrio desulfuricans (strain ATCC 27774 / DSM 6949 / MB).